We begin with the raw amino-acid sequence, 107 residues long: MTKSELVAQLASRFPQLVLKDADFAVKTMLDAMSDALSKGHRIEIRGFGSFGLNRRPARVGRNPKSGEKVQVPEKHVPHFKPGKELRERVDGRAGEPLKNDEPEDAQ.

Residues 55–107 form a disordered region; sequence RRPARVGRNPKSGEKVQVPEKHVPHFKPGKELRERVDGRAGEPLKNDEPEDAQ. Residues 65 to 101 show a composition bias toward basic and acidic residues; sequence KSGEKVQVPEKHVPHFKPGKELRERVDGRAGEPLKND.

Belongs to the bacterial histone-like protein family. As to quaternary structure, heterodimer of an alpha and a beta chain.

Its function is as follows. This protein is one of the two subunits of integration host factor, a specific DNA-binding protein that functions in genetic recombination as well as in transcriptional and translational control. This is Integration host factor subunit beta from Burkholderia pseudomallei (strain K96243).